The following is a 111-amino-acid chain: Succinate dehydrogenase assembly factor 1B, mitochondrial (111 aa).

The protein belongs to the complex I LYR family. SDHAF1 subfamily. Interacts with the iron-sulfur protein subunit within the SDH catalytic dimer.

The protein localises to the mitochondrion matrix. Functionally, plays an essential role in the assembly of succinate dehydrogenase (SDH), an enzyme complex (also referred to as respiratory complex II) that is a component of both the tricarboxylic acid (TCA) cycle and the mitochondrial electron transport chain, and which couples the oxidation of succinate to fumarate with the reduction of ubiquinone (coenzyme Q) to ubiquinol. Promotes maturation of the iron-sulfur protein subunit of the SDH catalytic dimer, protecting it from the deleterious effects of oxidants. May act together with SDHAF3. In Dictyostelium discoideum (Social amoeba), this protein is Succinate dehydrogenase assembly factor 1B, mitochondrial.